Consider the following 691-residue polypeptide: Tumor necrosis factor alpha-induced protein 2 (691 aa).

The tract at residues 9 to 111 (QGFPGQQSVP…KPRPELDGPL (103 aa)) is disordered. Over residues 12–31 (PGQQSVPGTLNFAVSPQKPR) the composition is skewed to polar residues. A compositionally biased stretch (low complexity) spans 33–45 (TSEAESETSMSEA). The segment covering 91–107 (QPRLSDLEVQPKPRPEL) has biased composition (basic and acidic residues).

It belongs to the SEC6 family.

May play a role as a mediator of inflammation and angiogenesis. The sequence is that of Tumor necrosis factor alpha-induced protein 2 (Tnfaip2) from Mus musculus (Mouse).